We begin with the raw amino-acid sequence, 330 residues long: 3'-5' exonuclease (330 aa).

The disordered stretch occupies residues 1 to 92 (MDQYLIKMST…DGTPSPEKEI (92 aa)). Basic and acidic residues-rich tracts occupy residues 27 to 39 (NTTRQTKDAKEKI) and 48 to 66 (KDTPEIIKDKENADTENPP). Phosphoserine occurs at positions 79 and 87. Residues 117–289 (SADEVMQWVE…IGQVIYRDIE (173 aa)) form the 3'-5' exonuclease domain. Mg(2+) contacts are provided by aspartate 139, glutamate 141, and aspartate 277.

Belongs to the WRNexo family.

It is found in the nucleus. Functionally, has exonuclease activity on both single-stranded and duplex templates bearing overhangs, but not blunt ended duplex DNA, and cleaves in a 3'-5' direction. Essential for the formation of DNA replication focal centers. Has an important role in maintaining genome stability. The sequence is that of 3'-5' exonuclease from Drosophila virilis (Fruit fly).